Reading from the N-terminus, the 328-residue chain is Stress response kinase A (328 aa).

Residue D201 is the Proton acceptor of the active site. N206 and D217 together coordinate Mg(2+). D217 is a catalytic residue.

Belongs to the SrkA/RdoA protein kinase family. Monomer. The cofactor is Mg(2+).

The protein localises to the cytoplasm. It catalyses the reaction L-seryl-[protein] + ATP = O-phospho-L-seryl-[protein] + ADP + H(+). The enzyme catalyses L-threonyl-[protein] + ATP = O-phospho-L-threonyl-[protein] + ADP + H(+). Functionally, a protein kinase that phosphorylates Ser and Thr residues. Probably acts to suppress the effects of stress linked to accumulation of reactive oxygen species. Probably involved in the extracytoplasmic stress response. Also has a role in LPS synthesis, through regulation of the galETK expression. A protein kinase that phosphorylates Ser and Thr residues. Probably acts to suppress the effects of stress linked to accumulation of reactive oxygen species. Probably involved in the extracytoplasmic stress response. In Shigella flexneri, this protein is Stress response kinase A.